We begin with the raw amino-acid sequence, 149 residues long: Deoxyuridine 5'-triphosphate nucleotidohydrolase (149 aa).

Substrate-binding positions include 68 to 70, N81, 85 to 87, and M95; these read RSG and LID.

It belongs to the dUTPase family. Mg(2+) is required as a cofactor.

The enzyme catalyses dUTP + H2O = dUMP + diphosphate + H(+). It participates in pyrimidine metabolism; dUMP biosynthesis; dUMP from dCTP (dUTP route): step 2/2. This enzyme is involved in nucleotide metabolism: it produces dUMP, the immediate precursor of thymidine nucleotides and it decreases the intracellular concentration of dUTP so that uracil cannot be incorporated into DNA. In Polynucleobacter necessarius subsp. necessarius (strain STIR1), this protein is Deoxyuridine 5'-triphosphate nucleotidohydrolase.